The primary structure comprises 251 residues: Tritrans,polycis-undecaprenyl-diphosphate synthase (geranylgeranyl-diphosphate specific) (251 aa).

Asp-29 is an active-site residue. Position 29 (Asp-29) interacts with Mg(2+). Residues 30 to 33 (GNRR), Phe-34, His-46, and 74 to 76 (STE) each bind substrate. The active-site Proton acceptor is the Asn-77. Substrate contacts are provided by residues Phe-78, Arg-80, Arg-200, and 206–208 (RLS).

It belongs to the UPP synthase family. As to quaternary structure, homodimer. It depends on Mg(2+) as a cofactor.

It carries out the reaction geranylgeranyl diphosphate + 7 isopentenyl diphosphate = tri-trans,hepta-cis-undecaprenyl diphosphate + 7 diphosphate. In terms of biological role, catalyzes the sequential condensation of isopentenyl diphosphate (IPP) with geranylgeranyl diphosphate (GGPP) to yield (2Z,6Z,10Z,14Z,18Z,22Z,26Z,30E,34E,38E)-undecaprenyl diphosphate (tritrans,heptacis-UPP). It is probably the precursor of glycosyl carrier lipids. This chain is Tritrans,polycis-undecaprenyl-diphosphate synthase (geranylgeranyl-diphosphate specific), found in Archaeoglobus fulgidus (strain ATCC 49558 / DSM 4304 / JCM 9628 / NBRC 100126 / VC-16).